The sequence spans 306 residues: Lymphotoxin-beta (306 aa).

Residues 1–27 are Cytoplasmic-facing; the sequence is MGTRGLQGLGGRPQGRGCLLLAVAGAT. A helical; Signal-anchor for type II membrane protein membrane pass occupies residues 28–48; that stretch reads SLVTLLLAVPITVLAVLALVP. Residues 49-306 are Extracellular-facing; it reads QDQGRRVEKI…KTFFGAVMVG (258 aa). Disordered stretches follow at residues 63–112 and 127–151; these read AQAQ…GPVA and PAAD…DLNP. Residues 74–85 show a composition bias toward low complexity; the sequence is PSCILPSPSSLS. Residues 95 to 112 show a composition bias toward polar residues; the sequence is QRSNASRNLASTSQGPVA. Asn98 carries an N-linked (GlcNAc...) asparagine glycan. Residues 154–305 form the THD domain; it reads PAAHLIGAWM…GKTFFGAVMV (152 aa). The N-linked (GlcNAc...) asparagine glycan is linked to Asn284.

Belongs to the tumor necrosis factor family. Heterotrimer of either two LTB and one LTA subunits or (less prevalent) two LTA and one LTB subunits.

It localises to the membrane. Its function is as follows. Cytokine that binds to LTBR/TNFRSF3. May play a specific role in immune response regulation. Provides the membrane anchor for the attachment of the heterotrimeric complex to the cell surface. The sequence is that of Lymphotoxin-beta (Ltb) from Mus musculus (Mouse).